Here is a 41-residue protein sequence, read N- to C-terminus: Photosystem II reaction center protein Y (41 aa).

The helical transmembrane segment at L4–I22 threads the bilayer.

Belongs to the PsbY family. PSII is composed of 1 copy each of membrane proteins PsbA, PsbB, PsbC, PsbD, PsbE, PsbF, PsbH, PsbI, PsbJ, PsbK, PsbL, PsbM, PsbT, PsbX, PsbY, Psb30/Ycf12, peripheral proteins PsbO, CyanoQ (PsbQ), PsbU, PsbV and a large number of cofactors. It forms dimeric complexes.

The protein localises to the cellular thylakoid membrane. In terms of biological role, loosely associated component of the core of photosystem II (PSII), it is not always seen in crystals. PSII is a light-driven water plastoquinone oxidoreductase, using light energy to abstract electrons from H(2)O, generating a proton gradient subsequently used for ATP formation. In Prochlorococcus marinus (strain MIT 9211), this protein is Photosystem II reaction center protein Y.